The chain runs to 79 residues: MAKSDIHPKWYPEAKVYCNGQVVMTVGSTKPELHVDVWSGNHPFYTGTQKIIDTEGRVERFLRKYGMSSTQTSGEQNKK.

The protein belongs to the bacterial ribosomal protein bL31 family. Type A subfamily. As to quaternary structure, part of the 50S ribosomal subunit.

In terms of biological role, binds the 23S rRNA. This is Large ribosomal subunit protein bL31 from Trichormus variabilis (strain ATCC 29413 / PCC 7937) (Anabaena variabilis).